We begin with the raw amino-acid sequence, 353 residues long: tRNA N(3)-cytidine methyltransferase METTL2 (353 aa).

The tract at residues 1-37 (MAAPVVAADSPVIENMPETAGGATENSAEAQKRPQFG) is disordered. Residues tryptophan 93, tyrosine 97, glycine 165, aspartate 190, aspartate 216, and isoleucine 237 each contribute to the S-adenosyl-L-methionine site.

This sequence belongs to the methyltransferase superfamily. METL family. Monomer.

It localises to the cytoplasm. It catalyses the reaction cytidine(32) in tRNA(Thr) + S-adenosyl-L-methionine = N(3)-methylcytidine(32) in tRNA(Thr) + S-adenosyl-L-homocysteine + H(+). It carries out the reaction cytidine(32) in tRNA(Arg)(CCU) + S-adenosyl-L-methionine = N(3)-methylcytidine(32) in tRNA(Arg)(CCU) + S-adenosyl-L-homocysteine + H(+). Its function is as follows. S-adenosyl-L-methionine-dependent methyltransferase that mediates N(3)-methylcytidine modification of residue 32 of the tRNA anticodon loop of tRNA(Thr)(UGU) and tRNA(Arg)(CCU). N(3)-methylcytidine methylation by mettl2a requires the N6-threonylcarbamoylation of tRNA (t6A37) by the EKC/KEOPS complex as prerequisite. This Danio rerio (Zebrafish) protein is tRNA N(3)-cytidine methyltransferase METTL2 (mettl2a).